A 195-amino-acid polypeptide reads, in one-letter code: Ras-related protein Rab-31 (195 aa).

GTP-binding residues include G16, G18, K19, S20, S21, D32, and H33. S20 contributes to the Mg(2+) binding site. 2 short sequence motifs (switch) span residues 30–42 (HFDHNISPTIGAS) and 63–79 (AGQERFHSLAPMYYRGS). S36 carries the post-translational modification Phosphoserine. GTP-binding residues include T38, G64, N119, D122, A150, and K151. T38 contributes to the Mg(2+) binding site. S-geranylgeranyl cysteine attachment occurs at residues C194 and C195.

It belongs to the small GTPase superfamily. Rab family. Interacts (in GDP-bound form) with RIN3 and GAPVD1, which function as guanine exchange factors (GEF). Interacts (in GTP-bound form) with EEA1. Interacts with NGFR. Interacts with EGFR. Interacts with OCRL. Interacts (in GTP-bound form) with APPL2; interaction contributes to or enhances recruitment of APPL2 to the phagosomes; interaction enhances Fc-gamma receptor-mediated phagocytosis through PI3K/Akt signaling in macrophages. Mg(2+) is required as a cofactor. As to expression, detected in brain astrocytes, spleen and intestine (at protein level).

It is found in the early endosome. Its subcellular location is the golgi apparatus. It localises to the trans-Golgi network. The protein localises to the trans-Golgi network membrane. The protein resides in the cytoplasmic vesicle. It is found in the phagosome. Its subcellular location is the phagosome membrane. It carries out the reaction GTP + H2O = GDP + phosphate + H(+). Regulated by guanine nucleotide exchange factors (GEFs) including RIN3 and GAPVD1 which promote the exchange of bound GDP for free GTP. Regulated by GTPase activating proteins (GAPs) which increase the GTP hydrolysis activity. Inhibited by GDP dissociation inhibitors (GDIs) which prevent Rab-GDP dissociation. Its function is as follows. The small GTPases Rab are key regulators of intracellular membrane trafficking, from the formation of transport vesicles to their fusion with membranes. Rabs cycle between an inactive GDP-bound form and an active GTP-bound form that is able to recruit to membranes different set of downstream effectors directly responsible for vesicle formation, movement, tethering and fusion. Required for the integrity and for normal function of the Golgi apparatus and the trans-Golgi network. Plays a role in insulin-stimulated translocation of GLUT4 to the cell membrane. Plays a role in the maturation of phagosomes that engulf pathogens, such as S.aureus and Mycobacterium. Plays a role in M6PR transport from the trans-Golgi network to endosomes. Plays a role in the internalization of EGFR from the cell membrane into endosomes. The sequence is that of Ras-related protein Rab-31 from Rattus norvegicus (Rat).